Here is a 246-residue protein sequence, read N- to C-terminus: Probable transcriptional regulatory protein BVU_3469 (246 aa).

It belongs to the TACO1 family.

The protein resides in the cytoplasm. The protein is Probable transcriptional regulatory protein BVU_3469 of Phocaeicola vulgatus (strain ATCC 8482 / DSM 1447 / JCM 5826 / CCUG 4940 / NBRC 14291 / NCTC 11154) (Bacteroides vulgatus).